A 466-amino-acid chain; its full sequence is MRAMSTNPPNLRPDLAPAARLGTAATRPGQPTIGMVSLGCPKALVDSERILTRLRAEGYGISPDYAGADAVIVNTCGFLDSAKAESLDAIGEALKENGKVIVTGCLGAEPDYIREHHPRILAVTGPHQYEQVLDAVHGAVPPDPDPFVDLLPASGVQLTPRHYSYLKISEGCNHKCKFCIIPDMRGKLASRPAHAVLREAEKLVDNGVKELLIISQDTSAYGLDRKYDTNLWKNREVRSHITDLARELGQLDAWVRLHYVYPYPHVRELIPLMADAGCNLLPYLDIPFQHAHPDTLKRMARPAAAARTLDEIAAWREICPEITLRSTFIVGYPGETEAEFQTLLDWMDEAQLDRVGCFQYENVAGARSNDLPDHVPAEVKQERWDRFMAKAQAISEAKLAARVGQVIEVIVDEVDDEAATCRTKSDAPEIDGNLFIDEGFEGLQPGDIVTVEVDEAGEYDLWGRLR.

Residues 31–141 (PTIGMVSLGC…VLDAVHGAVP (111 aa)) form the MTTase N-terminal domain. Residues Cys40, Cys76, Cys105, Cys172, Cys176, and Cys179 each contribute to the [4Fe-4S] cluster site. The Radical SAM core domain maps to 158–397 (LTPRHYSYLK…MAKAQAISEA (240 aa)). The TRAM domain occupies 400–466 (AARVGQVIEV…GEYDLWGRLR (67 aa)).

The protein belongs to the methylthiotransferase family. RimO subfamily. [4Fe-4S] cluster is required as a cofactor.

It is found in the cytoplasm. The enzyme catalyses L-aspartate(89)-[ribosomal protein uS12]-hydrogen + (sulfur carrier)-SH + AH2 + 2 S-adenosyl-L-methionine = 3-methylsulfanyl-L-aspartate(89)-[ribosomal protein uS12]-hydrogen + (sulfur carrier)-H + 5'-deoxyadenosine + L-methionine + A + S-adenosyl-L-homocysteine + 2 H(+). Its function is as follows. Catalyzes the methylthiolation of an aspartic acid residue of ribosomal protein uS12. This is Ribosomal protein uS12 methylthiotransferase RimO from Ruegeria pomeroyi (strain ATCC 700808 / DSM 15171 / DSS-3) (Silicibacter pomeroyi).